Consider the following 61-residue polypeptide: Insect toxin BsIT2 (61 aa).

The region spanning aspartate 1–lysine 61 is the LCN-type CS-alpha/beta domain. Disulfide bonds link cysteine 10–cysteine 60, cysteine 14–cysteine 35, cysteine 21–cysteine 42, and cysteine 25–cysteine 44.

It belongs to the long (4 C-C) scorpion toxin superfamily. Sodium channel inhibitor family. Beta subfamily. As to expression, expressed by the venom gland.

The protein localises to the secreted. Functionally, depressant insect beta-toxins cause a transient contraction paralysis followed by a slow flaccid paralysis. They bind voltage-independently at site-4 of sodium channels (Nav) and shift the voltage of activation toward more negative potentials thereby affecting sodium channel activation and promoting spontaneous and repetitive firing. This toxin is active only on insects. The chain is Insect toxin BsIT2 from Hottentotta tamulus sindicus (Scorpion).